Here is a 226-residue protein sequence, read N- to C-terminus: Ribosomal RNA small subunit methyltransferase G (226 aa).

S-adenosyl-L-methionine contacts are provided by residues G83, F88, 136–137, and R152; that span reads IE. The segment at 199–226 is disordered; that stretch reads FSPSQSDPEGSVLKVRGLHGPDGQPHRR.

The protein belongs to the methyltransferase superfamily. RNA methyltransferase RsmG family.

The protein localises to the cytoplasm. The catalysed reaction is guanosine(527) in 16S rRNA + S-adenosyl-L-methionine = N(7)-methylguanosine(527) in 16S rRNA + S-adenosyl-L-homocysteine. Functionally, specifically methylates the N7 position of guanine in position 527 of 16S rRNA. The chain is Ribosomal RNA small subunit methyltransferase G from Parvibaculum lavamentivorans (strain DS-1 / DSM 13023 / NCIMB 13966).